We begin with the raw amino-acid sequence, 235 residues long: Glucosamine-6-phosphate deaminase (235 aa).

The Proton acceptor; for enolization step role is filled by D62. Catalysis depends on N128, which acts as the For ring-opening step. H130 functions as the Proton acceptor; for ring-opening step in the catalytic mechanism. Catalysis depends on E135, which acts as the For ring-opening step.

It belongs to the glucosamine/galactosamine-6-phosphate isomerase family. NagB subfamily.

It catalyses the reaction alpha-D-glucosamine 6-phosphate + H2O = beta-D-fructose 6-phosphate + NH4(+). The protein operates within amino-sugar metabolism; N-acetylneuraminate degradation; D-fructose 6-phosphate from N-acetylneuraminate: step 5/5. Catalyzes the reversible isomerization-deamination of glucosamine 6-phosphate (GlcN6P) to form fructose 6-phosphate (Fru6P) and ammonium ion. This is Glucosamine-6-phosphate deaminase from Lactococcus lactis subsp. cremoris (strain SK11).